We begin with the raw amino-acid sequence, 429 residues long: Adenylosuccinate synthetase (429 aa).

GTP is bound by residues 12-18 (GDEGKGK) and 40-42 (GHT). D13 serves as the catalytic Proton acceptor. D13 and G40 together coordinate Mg(2+). IMP is bound by residues 13–16 (DEGK), 38–41 (NAGH), T128, R142, Q223, T238, and R302. H41 (proton donor) is an active-site residue. Substrate is bound at residue 298 to 304 (VNTGRKR). GTP is bound by residues R304, 330–332 (KLD), and 412–414 (GVG).

The protein belongs to the adenylosuccinate synthetase family. Homodimer. The cofactor is Mg(2+).

The protein resides in the cytoplasm. The enzyme catalyses IMP + L-aspartate + GTP = N(6)-(1,2-dicarboxyethyl)-AMP + GDP + phosphate + 2 H(+). The protein operates within purine metabolism; AMP biosynthesis via de novo pathway; AMP from IMP: step 1/2. Plays an important role in the de novo pathway of purine nucleotide biosynthesis. Catalyzes the first committed step in the biosynthesis of AMP from IMP. The protein is Adenylosuccinate synthetase of Corynebacterium glutamicum (strain R).